The sequence spans 396 residues: Acetate kinase (396 aa).

Asn-7 contributes to the Mg(2+) binding site. An ATP-binding site is contributed by Lys-14. Substrate is bound at residue Arg-88. Asp-145 (proton donor/acceptor) is an active-site residue. ATP contacts are provided by residues 205–209 (HLGNG), 279–281 (DFR), and 327–331 (GIGEN). A Mg(2+)-binding site is contributed by Glu-381.

Belongs to the acetokinase family. In terms of assembly, homodimer. It depends on Mg(2+) as a cofactor. The cofactor is Mn(2+).

It localises to the cytoplasm. It catalyses the reaction acetate + ATP = acetyl phosphate + ADP. The protein operates within metabolic intermediate biosynthesis; acetyl-CoA biosynthesis; acetyl-CoA from acetate: step 1/2. In terms of biological role, catalyzes the formation of acetyl phosphate from acetate and ATP. Can also catalyze the reverse reaction. In Campylobacter jejuni (strain RM1221), this protein is Acetate kinase.